A 220-amino-acid polypeptide reads, in one-letter code: MNLAIALDSPHPGLASYTILPRPFYHISLKPVSWPDETMRPAKSTDSVFVRTPVEAWVAPSPPDDKVAESSYLMFRAMYAVFTRDEKDLPLPALVLCRLIKASLRKDRKLYAELACRTADIGGKDTHVRLIISVLRAVYNDHYDYWSRLRVVLCYTVVFAVRNYLDDHKSAAFVLGAIAHYLALYRRLWFARLGGMPRSLRRQFPVTWALASLTDFLKSL.

This sequence belongs to the Epstein-Barr virus BALF1 family. As to quaternary structure, interacts with BHRF1; this interaction modulates BHRF1 activity. Interacts with host BAX and BAK1.

Its subcellular location is the host cytoplasm. Modulates the antiapoptotic activity of the viral protein BHRF1. May also play an active part in oncogenesis in Burkitt's lymphomy and nasopharyngeal carcinoma. The chain is Apoptosis regulator BALF1 from Homo sapiens (Human).